The sequence spans 1110 residues: Retinal guanylyl cyclase 1 (1110 aa).

An N-terminal signal peptide occupies residues 1–56; that stretch reads MTACTFLAGGLRDPGLCGPTRWAPSPPGLPPIPPRPRLRLRPPLLLLLLLPRSVLS. The Extracellular portion of the chain corresponds to 57-467; sequence AVFTVGVLGP…PDTICNGGVE (411 aa). An N-linked (GlcNAc...) asparagine glycan is attached at Asn302. Residues 468–492 traverse the membrane as a helical segment; that stretch reads PSVVFIGFLLVVGMGLAGAFLAHYC. One can recognise a Protein kinase domain in the interval 493–813; the sequence is RHRLLHIQMV…DRTFELFKSI (321 aa). Residues 493 to 1110 lie on the Cytoplasmic side of the membrane; it reads RHRLLHIQMV…KARPGQFSGK (618 aa). Positions 885–1015 constitute a Guanylate cyclase domain; the sequence is TLYFSDIVGF…DTVNTASAME (131 aa). Residues 1070 to 1110 are disordered; the sequence is PIPKPPDLQPGASNHGISLHEIPPDRRQKLEKARPGQFSGK. Residues 1091–1103 are compositionally biased toward basic and acidic residues; it reads IPPDRRQKLEKAR.

This sequence belongs to the adenylyl cyclase class-4/guanylyl cyclase family. As to quaternary structure, homodimer; requires homodimerization for guanylyl cyclase activity. Interacts (via C-terminus) with RD3 (via C-terminus); promotes the exit of GUCY2D from the endoplasmic reticulum and its trafficking to the photoreceptor outer segments. Interaction with RD3 negatively regulates GUCY2D guanylate cyclase activity. In terms of tissue distribution, expressed in the retina in rod outer segment.

Its subcellular location is the photoreceptor outer segment membrane. The protein resides in the endoplasmic reticulum membrane. It carries out the reaction GTP = 3',5'-cyclic GMP + diphosphate. Activated by GUCA1A when free calcium ions concentration is low, and inhibited by GUCA1A when free calcium ions concentration is high. Negatively regulated by RD3; inhibits the basal and GUCA1A-stimulated guanylate cyclase activity. Functionally, catalyzes the synthesis of cyclic GMP (cGMP) in rods and cones of photoreceptors. Plays an essential role in phototransduction, by mediating cGMP replenishment. May also participate in the trafficking of membrane-asociated proteins to the photoreceptor outer segment membrane. In Bos taurus (Bovine), this protein is Retinal guanylyl cyclase 1 (GUCY2D).